The sequence spans 86 residues: Large ribosomal subunit protein bL27 (86 aa).

The disordered stretch occupies residues 1–21; it reads MAHHKGGGSSRNGKDSNPQYL.

Belongs to the bacterial ribosomal protein bL27 family.

The chain is Large ribosomal subunit protein bL27 from Coprothermobacter proteolyticus (strain ATCC 35245 / DSM 5265 / OCM 4 / BT).